An 833-amino-acid polypeptide reads, in one-letter code: Leucine--tRNA ligase (833 aa).

The 'HIGH' region motif lies at P41–H52. Residues K610–S614 carry the 'KMSKS' region motif. K613 serves as a coordination point for ATP.

The protein belongs to the class-I aminoacyl-tRNA synthetase family.

The protein localises to the cytoplasm. It catalyses the reaction tRNA(Leu) + L-leucine + ATP = L-leucyl-tRNA(Leu) + AMP + diphosphate. The chain is Leucine--tRNA ligase from Streptococcus pneumoniae serotype 2 (strain D39 / NCTC 7466).